The following is a 397-amino-acid chain: Tryptophan synthase beta chain 1 (397 aa).

N6-(pyridoxal phosphate)lysine is present on Lys94.

It belongs to the TrpB family. Tetramer of two alpha and two beta chains. It depends on pyridoxal 5'-phosphate as a cofactor.

The enzyme catalyses (1S,2R)-1-C-(indol-3-yl)glycerol 3-phosphate + L-serine = D-glyceraldehyde 3-phosphate + L-tryptophan + H2O. Its pathway is amino-acid biosynthesis; L-tryptophan biosynthesis; L-tryptophan from chorismate: step 5/5. In terms of biological role, the beta subunit is responsible for the synthesis of L-tryptophan from indole and L-serine. This is Tryptophan synthase beta chain 1 (trpB1) from Archaeoglobus fulgidus (strain ATCC 49558 / DSM 4304 / JCM 9628 / NBRC 100126 / VC-16).